A 233-amino-acid polypeptide reads, in one-letter code: Homeobox protein Hox-B6b (233 aa).

Residues 136 to 141 (IYPWMQ) carry the Antp-type hexapeptide motif. Residues 155-214 (GRRGRQTYTRYQTLELEKEFHFNRYLTRRRRIEISHALCLTERQIKIWFQNRRMKWKKEN) constitute a DNA-binding region (homeobox). The interval 213–233 (ENKLLNPSKTPEEEEEAEKKS) is disordered. The segment covering 224–233 (EEEEEAEKKS) has biased composition (acidic residues).

This sequence belongs to the Antp homeobox family.

The protein localises to the nucleus. Sequence-specific transcription factor which is part of a developmental regulatory system that provides cells with specific positional identities on the anterior-posterior axis. This is Homeobox protein Hox-B6b (hoxb6b) from Takifugu rubripes (Japanese pufferfish).